Here is a 424-residue protein sequence, read N- to C-terminus: Fasciclin-like arabinogalactan protein 1 (424 aa).

Positions 1–24 (MAKKMSSLIIIFNILLLLTTQTHA) are cleaved as a signal peptide. FAS1 domains lie at 25-170 (HNVT…SRVL) and 184-323 (EMNL…DKVL). Residues Asn-26, Asn-128, Asn-160, Asn-186, and Asn-240 are each glycosylated (N-linked (GlcNAc...) asparagine). A disordered region spans residues 338-393 (APAPAPEDGDVADSPKAAKGKAKGKKKKAAPSPDNDPFGDSDSPAEGPDGEADDAT). Residues 355 to 366 (AKGKAKGKKKKA) show a composition bias toward basic residues. Asp-396 carries GPI-anchor amidated aspartate lipidation. The propeptide at 397–424 (AGAVRIIGGAKAGLVVSLLCLFASSWLL) is removed in mature form.

The protein belongs to the fasciclin-like AGP family. In terms of tissue distribution, preferentially expressed in flowers.

Its subcellular location is the secreted. The protein resides in the extracellular space. The protein localises to the apoplast. It localises to the cell membrane. Its function is as follows. May be a cell surface adhesion protein. The chain is Fasciclin-like arabinogalactan protein 1 (FLA1) from Arabidopsis thaliana (Mouse-ear cress).